Reading from the N-terminus, the 660-residue chain is DNA mismatch repair protein MutL (660 aa).

Residues serine 414 to asparagine 433 form a disordered region.

The protein belongs to the DNA mismatch repair MutL/HexB family.

Functionally, this protein is involved in the repair of mismatches in DNA. It is required for dam-dependent methyl-directed DNA mismatch repair. May act as a 'molecular matchmaker', a protein that promotes the formation of a stable complex between two or more DNA-binding proteins in an ATP-dependent manner without itself being part of a final effector complex. The chain is DNA mismatch repair protein MutL from Streptococcus pyogenes serotype M6 (strain ATCC BAA-946 / MGAS10394).